Reading from the N-terminus, the 257-residue chain is MSDLKAAALRALKLMDLTTLNDDDTDEKVIALCKNAKTAVGNTAAVCIYPRFIPAAKKQLREQGTPEVRIATVTNFPHGNDDIEIAVAETKAAVAYGADEVDVVFPYRALIAGNADVGFELVKQCKAACGDILLKVIIETGELKTEALIKQASELSIKAGADFIKTSTGKVPVNATPEAAEIMLTVIKDMDVAKTVGFKPAGGVRTAEDAQAFLAMADRILGGDWADNMHYRFGASSLLANLLHTLGEGEEAAQGGY.

The active-site Proton donor/acceptor is Asp-102. Lys-165 acts as the Schiff-base intermediate with acetaldehyde in catalysis. Residue Lys-199 is the Proton donor/acceptor of the active site.

Belongs to the DeoC/FbaB aldolase family. DeoC type 2 subfamily.

Its subcellular location is the cytoplasm. The enzyme catalyses 2-deoxy-D-ribose 5-phosphate = D-glyceraldehyde 3-phosphate + acetaldehyde. It functions in the pathway carbohydrate degradation; 2-deoxy-D-ribose 1-phosphate degradation; D-glyceraldehyde 3-phosphate and acetaldehyde from 2-deoxy-alpha-D-ribose 1-phosphate: step 2/2. Catalyzes a reversible aldol reaction between acetaldehyde and D-glyceraldehyde 3-phosphate to generate 2-deoxy-D-ribose 5-phosphate. The protein is Deoxyribose-phosphate aldolase of Photobacterium profundum (strain SS9).